Reading from the N-terminus, the 739-residue chain is Transcription regulator protein BACH1 (739 aa).

In terms of domain architecture, BTB spans 34–100; that stretch reads CDVTVLVEGQ…AYTAKLILSK (67 aa). Ser-196 bears the Phosphoserine mark. Disordered stretches follow at residues 287 to 321 and 344 to 391; these read MESEDTEGQDPSPQCPAEQPQGTPLPQDSAGPHGL and KTVK…RSSV. Basic and acidic residues-rich tracts occupy residues 346–364 and 376–391; these read VKTEKPLSRPDAQDEKPSE and PKEDSSSLASEDRSSV. The residue at position 448 (Ser-448) is a Phosphoserine. The bZIP domain occupies 560 to 623; the sequence is CIHDIRRRSK…GETKQNLTGL (64 aa). The segment at 565–581 is basic motif; the sequence is RRRSKNRIAAQRCRKRK. The leucine-zipper stretch occupies residues 585–592; the sequence is IQNLESEI. A disordered region spans residues 679–708; that stretch reads PPTAPPPCGRGSSAASQELVQESPPTTAAA. Low complexity predominate over residues 699–708; sequence QESPPTTAAA.

Belongs to the bZIP family. CNC subfamily. Heterodimer of BACH1 and MAFK. Post-translationally, ubiquitinated by the SCF(FBXL17) complex or by the by the SCF(FBXO22) complex, leading to its degradation by the proteasome. Under oxidative stress, reactive oxygen species covalently modify cysteine residues on the bZIP domain of BACH1 and release it from chromatin. If the BTB domain of BACH1 remains intact, its beta1-alpha6 degron is recognized by FBXO22, promoting its ubiquitination and degradation. If the structural integrity of the beta1-alpha6 degron is compromised, FBXL17 will transiently associate with the BACH1 BTB dimer and remodel it into stably bound monomer for ubiquitination and degradation. As to expression, ubiquitous.

The protein localises to the nucleus. In terms of biological role, transcriptional regulator that acts as a repressor or activator, depending on the context. Binds to NF-E2 DNA binding sites. Plays important roles in coordinating transcription activation and repression by MAFK. Together with MAF, represses the transcription of genes under the control of the NFE2L2 oxidative stress pathway. This chain is Transcription regulator protein BACH1 (Bach1), found in Mus musculus (Mouse).